A 226-amino-acid polypeptide reads, in one-letter code: Glutathione peroxidase 3 (226 aa).

The N-terminal stretch at 1–24 is a signal peptide; that stretch reads MARILRASCLLSLLLAGFVPPGRG. Sec-73 is a catalytic residue. Residue Sec-73 is a non-standard amino acid, selenocysteine.

This sequence belongs to the glutathione peroxidase family. As to quaternary structure, homotetramer. Secreted in plasma.

Its subcellular location is the secreted. The catalysed reaction is 2 glutathione + H2O2 = glutathione disulfide + 2 H2O. The enzyme catalyses tert-butyl hydroperoxide + 2 glutathione = tert-butanol + glutathione disulfide + H2O. Protects cells and enzymes from oxidative damage, by catalyzing the reduction of hydrogen peroxide, lipid peroxides and organic hydroperoxide, by glutathione. This is Glutathione peroxidase 3 from Rattus norvegicus (Rat).